Consider the following 398-residue polypeptide: Gastric triacylglycerol lipase (398 aa).

The signal sequence occupies residues 1–19; it reads MWLLLTMASLISVLGTTHG. Residues asparagine 34 and asparagine 99 are each glycosylated (N-linked (GlcNAc...) asparagine). The region spanning 78-377 is the AB hydrolase-1 domain; it reads PVVFLQHGLL…PFYNHLDFIW (300 aa). The active-site Nucleophile is serine 172. Cysteine 246 and cysteine 255 are oxidised to a cystine. Asparagine 271 and asparagine 327 each carry an N-linked (GlcNAc...) asparagine glycan. Catalysis depends on charge relay system residues aspartate 343 and histidine 372.

Belongs to the AB hydrolase superfamily. Lipase family.

The protein localises to the secreted. The enzyme catalyses a triacylglycerol + H2O = a diacylglycerol + a fatty acid + H(+). The catalysed reaction is 1,2,3-tri-(9Z-octadecenoyl)-glycerol + H2O = 1,2-di-(9Z-octadecenoyl)-sn-glycerol + (9Z)-octadecenoate + H(+). It catalyses the reaction 1,2,3-trioctanoylglycerol + H2O = 1,2-dioctanoyl-sn-glycerol + octanoate + H(+). Catalyzes the hydrolysis of triacylglycerols to yield free fatty acids, diacylglycerol, monoacylglycerol, and glycerol. Shows a preferential hydrolysis at the sn-3 position of triacylglycerol. The protein is Gastric triacylglycerol lipase (LIPF) of Homo sapiens (Human).